The sequence spans 100 residues: Small ribosomal subunit protein uS14c (100 aa).

The protein belongs to the universal ribosomal protein uS14 family. As to quaternary structure, part of the 30S ribosomal subunit.

It localises to the plastid. Its subcellular location is the chloroplast. In terms of biological role, binds 16S rRNA, required for the assembly of 30S particles. The sequence is that of Small ribosomal subunit protein uS14c from Phaeodactylum tricornutum (strain CCAP 1055/1).